A 305-amino-acid polypeptide reads, in one-letter code: Translation initiation factor eIF2B subunit alpha (305 aa).

An N-acetylserine modification is found at Ser-2. Phosphothreonine is present on Thr-291.

Belongs to the eIF-2B alpha/beta/delta subunits family. As to quaternary structure, component of the translation initiation factor 2B (eIF2B) complex which is a heterodecamer of two sets of five different subunits: alpha, beta, gamma, delta and epsilon. Subunits alpha, beta and delta comprise a regulatory subcomplex and subunits epsilon and gamma comprise a catalytic subcomplex. Within the complex, the hexameric regulatory complex resides at the center, with the two heterodimeric catalytic subcomplexes bound on opposite sides.

The protein localises to the cytoplasm. The protein resides in the cytosol. Acts as a component of the translation initiation factor 2B (eIF2B) complex, which catalyzes the exchange of GDP for GTP on the eukaryotic initiation factor 2 (eIF2) complex gamma subunit. Its guanine nucleotide exchange factor activity is repressed when bound to eIF2 complex phosphorylated on the alpha subunit, thereby limiting the amount of methionyl-initiator methionine tRNA available to the ribosome and consequently global translation is repressed. It activates the translation of GCN4 in response to low amino acid, carbon, or purine availability, by suppressing the inhibitory effects of multiple uORFs present in the leader of GCN4 mRNA. It may promote either repression or activation of GCN4 expression depending on amino acid availability. Modulation of GCN3 regulatory function in response to amino acid availability occurs post-translationally. The chain is Translation initiation factor eIF2B subunit alpha from Saccharomyces cerevisiae (strain ATCC 204508 / S288c) (Baker's yeast).